Reading from the N-terminus, the 248-residue chain is Adenosylcobinamide-GDP ribazoletransferase (248 aa).

The next 8 helical transmembrane spans lie at 3 to 23, 35 to 55, 63 to 83, 109 to 129, 135 to 155, 180 to 199, 200 to 219, and 228 to 248; these read ELKA…PINI, SYFP…YLLL, IVMT…HIDG, LGTN…LFLS, LLFS…VFSI, FVIA…PLKD, LALL…KYIS, and DTLG…FSIL.

The protein belongs to the CobS family. Mg(2+) serves as cofactor.

The protein localises to the cell membrane. The enzyme catalyses alpha-ribazole + adenosylcob(III)inamide-GDP = adenosylcob(III)alamin + GMP + H(+). It catalyses the reaction alpha-ribazole 5'-phosphate + adenosylcob(III)inamide-GDP = adenosylcob(III)alamin 5'-phosphate + GMP + H(+). Its pathway is cofactor biosynthesis; adenosylcobalamin biosynthesis; adenosylcobalamin from cob(II)yrinate a,c-diamide: step 7/7. Joins adenosylcobinamide-GDP and alpha-ribazole to generate adenosylcobalamin (Ado-cobalamin). Also synthesizes adenosylcobalamin 5'-phosphate from adenosylcobinamide-GDP and alpha-ribazole 5'-phosphate. In Caldanaerobacter subterraneus subsp. tengcongensis (strain DSM 15242 / JCM 11007 / NBRC 100824 / MB4) (Thermoanaerobacter tengcongensis), this protein is Adenosylcobinamide-GDP ribazoletransferase.